The chain runs to 140 residues: 3-hydroxyacyl-[acyl-carrier-protein] dehydratase FabZ (140 aa).

The active site involves His46.

This sequence belongs to the thioester dehydratase family. FabZ subfamily.

The protein localises to the cytoplasm. It carries out the reaction a (3R)-hydroxyacyl-[ACP] = a (2E)-enoyl-[ACP] + H2O. Involved in unsaturated fatty acids biosynthesis. Catalyzes the dehydration of short chain beta-hydroxyacyl-ACPs and long chain saturated and unsaturated beta-hydroxyacyl-ACPs. The chain is 3-hydroxyacyl-[acyl-carrier-protein] dehydratase FabZ from Pseudothermotoga lettingae (strain ATCC BAA-301 / DSM 14385 / NBRC 107922 / TMO) (Thermotoga lettingae).